Reading from the N-terminus, the 309-residue chain is Aspartate carbamoyltransferase catalytic subunit (309 aa).

Arg-57 and Thr-58 together coordinate carbamoyl phosphate. Lys-86 provides a ligand contact to L-aspartate. Residues Arg-107, His-135, and Gln-138 each coordinate carbamoyl phosphate. 2 residues coordinate L-aspartate: Arg-168 and Arg-229. The carbamoyl phosphate site is built by Leu-269 and Pro-270.

It belongs to the aspartate/ornithine carbamoyltransferase superfamily. ATCase family. Heterooligomer of catalytic and regulatory chains.

The enzyme catalyses carbamoyl phosphate + L-aspartate = N-carbamoyl-L-aspartate + phosphate + H(+). Its pathway is pyrimidine metabolism; UMP biosynthesis via de novo pathway; (S)-dihydroorotate from bicarbonate: step 2/3. Functionally, catalyzes the condensation of carbamoyl phosphate and aspartate to form carbamoyl aspartate and inorganic phosphate, the committed step in the de novo pyrimidine nucleotide biosynthesis pathway. The chain is Aspartate carbamoyltransferase catalytic subunit from Methanopyrus kandleri (strain AV19 / DSM 6324 / JCM 9639 / NBRC 100938).